Here is a 331-residue protein sequence, read N- to C-terminus: Protein REVEILLE 6 (331 aa).

The HTH myb-type domain occupies 67–121 (TITKSRESWTEPEHDKFLEALQLFDRDWKKIEAFIGSKTVIQIRSHAQKYFLKVQ). The H-T-H motif DNA-binding region spans 94–117 (WKKIEAFIGSKTVIQIRSHAQKYF). Disordered stretches follow at residues 122–166 (KSGT…EPND), 203–237 (LPKA…GNVG), and 309–331 (SETA…EIST). The segment covering 150–165 (VQLQVPGSFKSTSEPN) has biased composition (polar residues). Low complexity predominate over residues 211-220 (NNNCSSSSEN). 2 stretches are compositionally biased toward basic and acidic residues: residues 226–235 (SNRDARDHGN) and 322–331 (LNKDPPEIST).

Its subcellular location is the nucleus. Probable transcription factor. RVE4, RVE6 and RVE8 are components of the circadian system acting synergistically to regulate flowering time, redundantly to regulate leaf growth, and antagonistically to regulate hypocotyl elongation; their action seems independent of ZTL and HY5. In Arabidopsis thaliana (Mouse-ear cress), this protein is Protein REVEILLE 6.